Consider the following 434-residue polypeptide: MTDSTNNAHFTSEERARHLLERLSGTGADSVSIPGTRVTSRSFAEMTTLRIGAAPAGVVECSSAEAVAQVVSFLDAHTQPLLIVGGGSNLVVGEGDEVSQLVVVLMSAGGGEGGVDKKGAAEKSAEGDVMIDRETGVVRAFAGVEWDQLVAATVEAGLGGLECLSGIPGSVGATPVQNVGAYGAEVAQVLRRVQLYDRTRGELEWVDPSALDLGYRYSNLKFTSRAVVTAVEFQLTTDGLSVPLRFGELARRLGVDADEAAAGEIRRPATDVRQAVLELRAGKGMVLDSADHDTWSAGSFFTNPIVTGEEARDAVVAAVREKCGDAEAESMPLYSVKSSGGDASGGGAGASVGEPQYKFSAAWLIERAGFAKGWHVPGNERASLSTKHTLALTNRGSATSADVVELARAVRTGVREAFGVVLEPEPIWVGVSID.

The FAD-binding PCMH-type domain maps to 51–238 (IGAAPAGVVE…TAVEFQLTTD (188 aa)). R216 is an active-site residue. The active-site Proton donor is S299. The active site involves E425.

The protein belongs to the MurB family. FAD serves as cofactor.

It is found in the cytoplasm. The catalysed reaction is UDP-N-acetyl-alpha-D-muramate + NADP(+) = UDP-N-acetyl-3-O-(1-carboxyvinyl)-alpha-D-glucosamine + NADPH + H(+). It functions in the pathway cell wall biogenesis; peptidoglycan biosynthesis. In terms of biological role, cell wall formation. This chain is UDP-N-acetylenolpyruvoylglucosamine reductase, found in Corynebacterium jeikeium (strain K411).